We begin with the raw amino-acid sequence, 320 residues long: MGDIRTFVFAIEDTETTQGLCKTIGRSSSFDQNSLCKPYNLYFDEPELSRQHAVLCIKTPIPKIEGVPSIEQLRICIRDLNNKTGTVNLVSDGPNDEIDLKNGDAFGLIAIDNHPFRDNHHLAAKLIFRIELEYFDEAREIVKCTITNVTFGKNNTVSSFPIHSATSTEDSDSSWYGLSEASTQTEVADECHETNTILTRGGRFSILSLRKRGSKQDQKICSNFDRKIHETSSFEEEIEVCTDTDTTEEKEEEEEKEEGDDEEGEIELEIIRVKRIKGRTKIKKTLTCFSKNKKIITPQHSNSMWLLLIVILIFDRLLSN.

Residues 22–86 (KTIGRSSSFD…IRDLNNKTGT (65 aa)) form the FHA domain. Residues 242 to 264 (TDTDTTEEKEEEEEKEEGDDEEG) are disordered.

This is an uncharacterized protein from Saccharomyces cerevisiae (strain ATCC 204508 / S288c) (Baker's yeast).